Consider the following 348-residue polypeptide: Phenylalanine--tRNA ligase alpha subunit (348 aa).

Glu-262 contacts Mg(2+).

Belongs to the class-II aminoacyl-tRNA synthetase family. Phe-tRNA synthetase alpha subunit type 1 subfamily. As to quaternary structure, tetramer of two alpha and two beta subunits. Mg(2+) is required as a cofactor.

It localises to the cytoplasm. It catalyses the reaction tRNA(Phe) + L-phenylalanine + ATP = L-phenylalanyl-tRNA(Phe) + AMP + diphosphate + H(+). The sequence is that of Phenylalanine--tRNA ligase alpha subunit from Streptococcus pneumoniae (strain JJA).